A 720-amino-acid polypeptide reads, in one-letter code: Glycine--tRNA ligase beta subunit (720 aa).

This sequence belongs to the class-II aminoacyl-tRNA synthetase family. Tetramer of two alpha and two beta subunits.

It is found in the cytoplasm. The enzyme catalyses tRNA(Gly) + glycine + ATP = glycyl-tRNA(Gly) + AMP + diphosphate. This is Glycine--tRNA ligase beta subunit from Dinoroseobacter shibae (strain DSM 16493 / NCIMB 14021 / DFL 12).